Consider the following 722-residue polypeptide: Peroxisomal bifunctional enzyme (722 aa).

An enoyl-CoA hydratase / isomerase region spans residues 1 to 281; it reads MAEYLRLPHS…FAEKSANKWS (281 aa). A Blocked amino end (Ala) modification is found at alanine 2. Lysine 38 is modified (N6-succinyllysine). Glycine 100 lines the substrate pocket. The residue at position 173 (lysine 173) is an N6-acetyllysine; alternate. Lysine 173 carries the post-translational modification N6-succinyllysine; alternate. The residue at position 182 (lysine 182) is an N6-succinyllysine. Lysine 190 and lysine 218 each carry N6-acetyllysine; alternate. An N6-succinyllysine; alternate mark is found at lysine 190 and lysine 218. Residue lysine 241 is modified to N6-succinyllysine. At lysine 249 the chain carries N6-acetyllysine. Lysine 253 is modified (N6-succinyllysine). Lysine 275 is modified (N6-acetyllysine; alternate). Lysine 275 is subject to N6-succinyllysine; alternate. N6-succinyllysine occurs at positions 279, 289, and 330. The 3-hydroxyacyl-CoA dehydrogenase stretch occupies residues 282–571; sequence TPSGASWKTA…DMLCEAGRFG (290 aa). An N6-acetyllysine mark is found at lysine 345, lysine 359, and lysine 463. Lysine 531 is modified (N6-succinyllysine). At threonine 547 the chain carries Phosphothreonine. An N6-succinyllysine modification is found at lysine 576. 3 positions are modified to N6-acetyllysine; alternate: lysine 583, lysine 590, and lysine 709. Lysine 583, lysine 590, and lysine 709 each carry N6-succinyllysine; alternate. Residues 720–722 carry the Microbody targeting signal motif; the sequence is SKL. Residue lysine 721 is modified to N6-succinyllysine.

The protein in the N-terminal section; belongs to the enoyl-CoA hydratase/isomerase family. In the C-terminal section; belongs to the 3-hydroxyacyl-CoA dehydrogenase family. Monomer. In terms of processing, acetylated, leading to enhanced enzyme activity. Acetylation is enhanced by up to 80% after treatment either with trichostin A (TCA) or with nicotinamide (NAM) with highest increase on Lys-345. Acetylation and enzyme activity increased by about 1.5% on addition of fatty acids.

It localises to the peroxisome. It catalyses the reaction a (3S)-3-hydroxyacyl-CoA = a (2E)-enoyl-CoA + H2O. The catalysed reaction is a 4-saturated-(3S)-3-hydroxyacyl-CoA = a (3E)-enoyl-CoA + H2O. The enzyme catalyses a (3Z)-enoyl-CoA = a 4-saturated (2E)-enoyl-CoA. It carries out the reaction a (3E)-enoyl-CoA = a 4-saturated (2E)-enoyl-CoA. It catalyses the reaction a (3S)-3-hydroxyacyl-CoA + NAD(+) = a 3-oxoacyl-CoA + NADH + H(+). The catalysed reaction is (2S,3S)-3-hydroxy-2-methylbutanoyl-CoA = (2E)-2-methylbut-2-enoyl-CoA + H2O. The enzyme catalyses (3E,5Z)-tetradecadienoyl-CoA = (2E,5Z)-tetradecadienoyl-CoA. It carries out the reaction (3E,5Z)-octadienoyl-CoA = (2E,5Z)-octadienoyl-CoA. It catalyses the reaction (3S)-hydroxydecanoyl-CoA + NAD(+) = 3-oxodecanoyl-CoA + NADH + H(+). The catalysed reaction is (3E)-decenoyl-CoA = (2E)-decenoyl-CoA. The enzyme catalyses (3Z)-hexenoyl-CoA = (2E)-hexenoyl-CoA. It carries out the reaction (3E)-hexenoyl-CoA = (2E)-hexenoyl-CoA. It catalyses the reaction (3S)-hydroxydecanoyl-CoA = (2E)-decenoyl-CoA + H2O. The catalysed reaction is (3S)-hydroxyhexanoyl-CoA = (2E)-hexenoyl-CoA + H2O. The enzyme catalyses (3S)-hydroxyhexadecanoyl-CoA + NAD(+) = 3-oxohexadecanoyl-CoA + NADH + H(+). It carries out the reaction (3S)-hydroxyhexadecanoyl-CoA = (2E)-hexadecenoyl-CoA + H2O. It catalyses the reaction (2E)-hexadecenedioyl-CoA + H2O = (3S)-hydroxyhexadecanedioyl-CoA. The catalysed reaction is (3S)-hydroxyhexadecanedioyl-CoA + NAD(+) = 3-oxohexadecanedioyl-CoA + NADH + H(+). It functions in the pathway lipid metabolism; fatty acid beta-oxidation. With respect to regulation, enzyme activity enhanced by acetylation. Functionally, peroxisomal trifunctional enzyme possessing 2-enoyl-CoA hydratase, 3-hydroxyacyl-CoA dehydrogenase, and delta 3, delta 2-enoyl-CoA isomerase activities. Catalyzes two of the four reactions of the long chain fatty acids peroxisomal beta-oxidation pathway. Can also use branched-chain fatty acids such as 2-methyl-2E-butenoyl-CoA as a substrate, which is hydrated into (2S,3S)-3-hydroxy-2-methylbutanoyl-CoA. Optimal isomerase for 2,5 double bonds into 3,5 form isomerization in a range of enoyl-CoA species. Also able to isomerize both 3-cis and 3-trans double bonds into the 2-trans form in a range of enoyl-CoA species. Regulates the amount of medium-chain dicarboxylic fatty acids which are essential regulators of all fatty acid oxidation pathways. Also involved in the degradation of long-chain dicarboxylic acids through peroxisomal beta-oxidation. The protein is Peroxisomal bifunctional enzyme of Rattus norvegicus (Rat).